A 70-amino-acid chain; its full sequence is Small ribosomal subunit protein bS21 (70 aa).

Belongs to the bacterial ribosomal protein bS21 family.

This is Small ribosomal subunit protein bS21 from Nitratiruptor sp. (strain SB155-2).